A 397-amino-acid chain; its full sequence is Tryptophan synthase beta chain (397 aa).

At Lys89 the chain carries N6-(pyridoxal phosphate)lysine.

It belongs to the TrpB family. In terms of assembly, tetramer of two alpha and two beta chains. Pyridoxal 5'-phosphate serves as cofactor.

It catalyses the reaction (1S,2R)-1-C-(indol-3-yl)glycerol 3-phosphate + L-serine = D-glyceraldehyde 3-phosphate + L-tryptophan + H2O. The protein operates within amino-acid biosynthesis; L-tryptophan biosynthesis; L-tryptophan from chorismate: step 5/5. The beta subunit is responsible for the synthesis of L-tryptophan from indole and L-serine. The chain is Tryptophan synthase beta chain from Leptospira interrogans serogroup Icterohaemorrhagiae serovar copenhageni (strain Fiocruz L1-130).